The sequence spans 433 residues: Type I acyl-CoA thioesterase mpaH (433 aa).

Residues 58 to 246 (HGVGLPKELY…IKARFGTTAD (189 aa)) form an abhydrolase domain region. Residue valine 60 participates in substrate binding. The active-site Nucleophile is serine 139. Phenylalanine 140 provides a ligand contact to substrate. Catalysis depends on residues aspartate 163 and histidine 365.

This sequence belongs to the AB hydrolase superfamily. MpaH hydrolase family. As to quaternary structure, homodimer.

Its subcellular location is the peroxisome matrix. The enzyme catalyses mycophenolyl-CoA + H2O = mycophenolate + CoA + H(+). It participates in secondary metabolite biosynthesis; terpenoid biosynthesis. Functionally, type I acyl-CoA thioesterase; part of the gene cluster that mediates the biosynthesis of mycophenolic acid (MPA), the first isolated antibiotic natural product in the world obtained from a culture of Penicillium brevicompactum in 1893. MpaH acts as a peroxisomal acyl-CoA hydrolase that converts MPA-CoA into the final product MPA. The first step of the pathway is the synthesis of 5-methylorsellinic acid (5MOA) by the cytosolic polyketide synthase mpaC. 5MOA is then converted to the phthalide compound 5,7-dihydroxy-4,6-dimethylphthalide (DHMP) by the endoplasmic reticulum-bound cytochrome P450 monooxygenase mpaDE. MpaDE first catalyzes hydroxylation of 5-MOA to 4,6-dihydroxy-2-(hydroxymethyl)-3-methylbenzoic acid (DHMB). MpaDE then acts as a lactone synthase that catalyzes the ring closure to convert DHMB into DHMP. The next step is the prenylation of DHMP by the Golgi apparatus-associated prenyltransferase mpaA to yield farnesyl-DHMP (FDHMP). The ER-bound oxygenase mpaB then mediates the oxidative cleavage the C19-C20 double bond in FDHMP to yield FDHMP-3C via a mycophenolic aldehyde intermediate. The O-methyltransferase mpaG catalyzes the methylation of FDHMP-3C to yield MFDHMP-3C. After the cytosolic methylation of FDHMP-3C, MFDHMP-3C enters into peroxisomes probably via free diffusion due to its low molecular weight. Upon a peroxisomal CoA ligation reaction, catalyzed by a beta-oxidation component enzyme acyl-CoA ligase ACL891, MFDHMP-3C-CoA would then be restricted to peroxisomes for the following beta-oxidation pathway steps. The peroxisomal beta-oxidation machinery than converts MFDHMP-3C-CoA into MPA_CoA, via a beta-oxidation chain-shortening process. Finally mpaH acts as a peroxisomal acyl-CoA hydrolase with high substrate specificity toward MPA-CoA to release the final product MPA. This is Type I acyl-CoA thioesterase mpaH from Penicillium brevicompactum.